A 378-amino-acid polypeptide reads, in one-letter code: Chaperone protein DnaJ (378 aa).

The J domain maps to 5-70; that stretch reads DYYETLGVSQ…QKRAAYDQYG (66 aa). Residues 134-212 form a CR-type zinc finger; it reads GKSLEIKVPT…CRGQGRVEKT (79 aa). Positions 147, 150, 164, 167, 186, 189, 200, and 203 each coordinate Zn(2+). CXXCXGXG motif repeat units follow at residues 147 to 154, 164 to 171, 186 to 193, and 200 to 207; these read CEPCDGSG, CSTCHGHG, CPTCSGKG, and CTSCRGQG.

It belongs to the DnaJ family. In terms of assembly, homodimer. It depends on Zn(2+) as a cofactor.

The protein localises to the cytoplasm. Its function is as follows. Participates actively in the response to hyperosmotic and heat shock by preventing the aggregation of stress-denatured proteins and by disaggregating proteins, also in an autonomous, DnaK-independent fashion. Unfolded proteins bind initially to DnaJ; upon interaction with the DnaJ-bound protein, DnaK hydrolyzes its bound ATP, resulting in the formation of a stable complex. GrpE releases ADP from DnaK; ATP binding to DnaK triggers the release of the substrate protein, thus completing the reaction cycle. Several rounds of ATP-dependent interactions between DnaJ, DnaK and GrpE are required for fully efficient folding. Also involved, together with DnaK and GrpE, in the DNA replication of plasmids through activation of initiation proteins. The chain is Chaperone protein DnaJ from Colwellia psychrerythraea (strain 34H / ATCC BAA-681) (Vibrio psychroerythus).